A 608-amino-acid chain; its full sequence is UvrABC system protein C (608 aa).

The 79-residue stretch at 15–93 (HQPGVYRMYN…IKQYLPKYNV (79 aa)) folds into the GIY-YIG domain. Residues 203–238 (RQVIQTLVKQMESASQSLNFEKAAIIRDQIQAMRRV) form the UVR domain.

This sequence belongs to the UvrC family. Interacts with UvrB in an incision complex.

The protein localises to the cytoplasm. Its function is as follows. The UvrABC repair system catalyzes the recognition and processing of DNA lesions. UvrC both incises the 5' and 3' sides of the lesion. The N-terminal half is responsible for the 3' incision and the C-terminal half is responsible for the 5' incision. The chain is UvrABC system protein C from Aliivibrio fischeri (strain ATCC 700601 / ES114) (Vibrio fischeri).